A 778-amino-acid polypeptide reads, in one-letter code: Subtilisin-like protease SBT3.6 (778 aa).

The signal sequence occupies residues 1–22 (MMNYRTSIYVVLSLVIFLNVQR). The propeptide at 23-113 (SFVAESSAKR…VIPDSFYKLA (91 aa)) is activation peptide. The 80-residue stretch at 34–113 (VHIVYLGEKQ…VIPDSFYKLA (80 aa)) folds into the Inhibitor I9 domain. A glycan (N-linked (GlcNAc...) asparagine) is linked at Asn-69. The Peptidase S8 domain occupies 117-625 (TWDYLGLSAA…GGLVNPEKSA (509 aa)). Asp-147 acts as the Charge relay system in catalysis. Asn-158, Asn-180, Asn-202, and Asn-206 each carry an N-linked (GlcNAc...) asparagine glycan. Catalysis depends on His-222, which acts as the Charge relay system. Asn-237, Asn-399, Asn-414, and Asn-541 each carry an N-linked (GlcNAc...) asparagine glycan. The 96-residue stretch at 388–483 (SLVYPENPGN…ELGTDILLYT (96 aa)) folds into the PA domain. Catalysis depends on Ser-556, which acts as the Charge relay system. N-linked (GlcNAc...) asparagine glycosylation is found at Asn-648, Asn-724, and Asn-759.

It belongs to the peptidase S8 family.

It is found in the secreted. In Arabidopsis thaliana (Mouse-ear cress), this protein is Subtilisin-like protease SBT3.6.